The following is a 228-amino-acid chain: UPF0758 protein CLK_2387 (228 aa).

The MPN domain occupies 106 to 228 (KISTPLDVSN…YVSMKEKGTI (123 aa)). Histidine 177, histidine 179, and aspartate 190 together coordinate Zn(2+). The JAMM motif motif lies at 177 to 190 (HNHPSGDPTPSKED).

Belongs to the UPF0758 family.

This Clostridium botulinum (strain Loch Maree / Type A3) protein is UPF0758 protein CLK_2387.